The primary structure comprises 82 residues: uncharacterized protein (82 aa).

A run of 3 helical transmembrane segments spans residues 1–21, 22–42, and 62–82; these read MSAS…SVST, VLLG…LAAF, and WRLL…LTLL.

The protein localises to the cell membrane. This is an uncharacterized protein from Stutzerimonas stutzeri (Pseudomonas stutzeri).